Consider the following 307-residue polypeptide: Zinc-alpha-2-glycoprotein (307 aa).

Residues 1–17 (MVPVLLSLPLLLGPAVF) form the signal peptide. Pyrrolidone carboxylic acid is present on Gln18. Cys118 and Cys181 form a disulfide bridge. Asn123, Asn190, and Asn254 each carry an N-linked (GlcNAc...) asparagine glycan. The 86-residue stretch at 202-287 (PTVTITSRVI…DHRGFSQSLS (86 aa)) folds into the Ig-like C1-type domain. Cys220 and Cys275 are joined by a disulfide.

This sequence belongs to the MHC class I family. As to quaternary structure, interacts with PIP.

The protein resides in the secreted. Stimulates lipid degradation in adipocytes and causes the extensive fat losses associated with some advanced cancers. The protein is Zinc-alpha-2-glycoprotein (Azgp1) of Mus musculus (Mouse).